The sequence spans 96 residues: Large ribosomal subunit protein uL23 (96 aa).

The protein belongs to the universal ribosomal protein uL23 family. Part of the 50S ribosomal subunit. Contacts protein L29, and trigger factor when it is bound to the ribosome.

In terms of biological role, one of the early assembly proteins it binds 23S rRNA. One of the proteins that surrounds the polypeptide exit tunnel on the outside of the ribosome. Forms the main docking site for trigger factor binding to the ribosome. The chain is Large ribosomal subunit protein uL23 from Vesicomyosocius okutanii subsp. Calyptogena okutanii (strain HA).